Reading from the N-terminus, the 202-residue chain is GTP cyclohydrolase 1 (202 aa).

Zn(2+) is bound by residues Cys-90, His-93, and Cys-163.

This sequence belongs to the GTP cyclohydrolase I family. As to quaternary structure, toroid-shaped homodecamer, composed of two pentamers of five dimers.

It catalyses the reaction GTP + H2O = 7,8-dihydroneopterin 3'-triphosphate + formate + H(+). It functions in the pathway cofactor biosynthesis; 7,8-dihydroneopterin triphosphate biosynthesis; 7,8-dihydroneopterin triphosphate from GTP: step 1/1. The polypeptide is GTP cyclohydrolase 1 (folE) (Mycobacterium bovis (strain ATCC BAA-935 / AF2122/97)).